The primary structure comprises 476 residues: ATP synthase subunit beta, mitochondrial (476 aa).

Position 156 to 163 (156 to 163 (GAGVGKTV)) interacts with ATP.

In terms of assembly, F-type ATP synthases have 2 components, the catalytic core F(1) and the membrane-embedded component F(0), linked together by a central stalk and a peripheral stalk. The central stalk, also called rotor shaft, is often seen as part of F(1). The peripheral stalk is seen as part of F(0). F(0) contains the membrane channel next to the rotor. F-type ATP synthases form dimers but each monomer functions independently in ATP generation. The dimer consists of 18 different polypeptides: ATP1 (subunit alpha, part of F(1), 3 molecules per monomer), ATP2 (subunit beta, part of F(1), 3 molecules per monomer), ATP3 (subunit gamma, part of the central stalk), ATP4 (subunit b, part of the peripheral stalk), ATP5/OSCP (subunit 5/OSCP, part of the peripheral stalk), ATP6 (subunit a, part of the peripheral stalk), ATP7 (subunit d, part of the peripheral stalk), ATP8 (subunit 8, part of the peripheral stalk), OLI1 (subunit c, part of the rotor, 10 molecules per monomer), ATP14 (subunit h, part of the peripheral stalk), ATP15 (subunit epsilon, part of the central stalk), ATP16 (subunit delta, part of the central stalk), ATP17 (subunit f, part of the peripheral stalk), ATP18 (subunit i/j, part of the peripheral stalk). Dimer-specific subunits are ATP19 (subunit k, at interface between monomers), ATP20 (subunit g, at interface between monomers), TIM11 (subunit e, at interface between monomers). Also contains subunit L.

It localises to the mitochondrion inner membrane. The catalysed reaction is ATP + H2O + 4 H(+)(in) = ADP + phosphate + 5 H(+)(out). Mitochondrial membrane ATP synthase (F(1)F(0) ATP synthase or Complex V) produces ATP from ADP in the presence of a proton gradient across the membrane which is generated by electron transport complexes of the respiratory chain. F-type ATP synthases consist of two structural domains, F(1) - containing the extramembraneous catalytic core, and F(0) - containing the membrane proton channel, linked together by a central stalk and a peripheral stalk. During catalysis, ATP synthesis in the catalytic domain of F(1) is coupled via a rotary mechanism of the central stalk subunits to proton translocation. Subunits alpha/ATP1 and beta/ATP2 form the catalytic core in F(1). Rotation of the central stalk against the surrounding alpha/ATP1(3)beta/ATP2(3) subunits leads to hydrolysis of ATP in three separate catalytic sites on the beta/ATP2 subunits. This is ATP synthase subunit beta, mitochondrial from Pichia angusta (Yeast).